The chain runs to 24 residues: Citropin-3.1.2 (24 aa).

As to expression, expressed by the dorsal and submental skin glands.

The protein resides in the secreted. In Ranoidea citropa (Australian Blue Mountains tree frog), this protein is Citropin-3.1.2.